The primary structure comprises 452 residues: MSHSAGPGAAQPATAAAPRQRTPWITRVGRVFRFAAQRADEEKLLQVASSLTFTTVLGIVPMLAVVLSLFTAFPVFQDFRLALEDFLANSLMPPAVSDNIMDYLNQFAYQASRLTAIGGAFLVVTSLLLIMTIDKTFNDIWHVTRQRPLPQRALVYWAVVTLGPVVAGASLWATSFLARESLGLVRDVPEIVSLAISFLPLILTGLGFAALFVVVPNRHVYWRDALVGGFGTAIVLELMKAAFAYYLTRFPTYTVIYGAFATLPIFLLWIYLSWLAVLFGATVAASAPLIRLGRWEINRSPGAPFIDALAVLRALHAAQGMRPAGRSASALAKRLHLHHDELNAVLEKLENLGLAARTAEQRWILACDPRSTTLEPVFDNFLLDRHQPRLRDDPQVVQAAAAVLGQDGGQAPTLEELAGLAHNTPVGLAAIVPLEAGKNSRRGPHAPGESSC.

6 helical membrane passes run 56–76 (VLGI…FPVF), 114–134 (LTAI…MTID), 153–173 (ALVY…SLWA), 195–215 (AISF…FVVV), 225–245 (ALVG…AFAY), and 259–279 (AFAT…AVLF).

Belongs to the UPF0761 family.

It localises to the cell inner membrane. The polypeptide is UPF0761 membrane protein Bpet3042 (Bordetella petrii (strain ATCC BAA-461 / DSM 12804 / CCUG 43448)).